The sequence spans 240 residues: UDP-2,3-diacylglucosamine hydrolase (240 aa).

Mn(2+) contacts are provided by Asp-8, His-10, Asp-41, Asn-79, and His-114. Asn-79 to Arg-80 serves as a coordination point for substrate. Substrate is bound by residues Asp-122, Ser-160, Asn-164, Lys-167, and His-195. Residues His-195 and His-197 each contribute to the Mn(2+) site.

This sequence belongs to the LpxH family. Mn(2+) is required as a cofactor.

It is found in the cell inner membrane. The catalysed reaction is UDP-2-N,3-O-bis[(3R)-3-hydroxytetradecanoyl]-alpha-D-glucosamine + H2O = 2-N,3-O-bis[(3R)-3-hydroxytetradecanoyl]-alpha-D-glucosaminyl 1-phosphate + UMP + 2 H(+). The protein operates within glycolipid biosynthesis; lipid IV(A) biosynthesis; lipid IV(A) from (3R)-3-hydroxytetradecanoyl-[acyl-carrier-protein] and UDP-N-acetyl-alpha-D-glucosamine: step 4/6. Hydrolyzes the pyrophosphate bond of UDP-2,3-diacylglucosamine to yield 2,3-diacylglucosamine 1-phosphate (lipid X) and UMP by catalyzing the attack of water at the alpha-P atom. Involved in the biosynthesis of lipid A, a phosphorylated glycolipid that anchors the lipopolysaccharide to the outer membrane of the cell. The chain is UDP-2,3-diacylglucosamine hydrolase from Shigella boydii serotype 18 (strain CDC 3083-94 / BS512).